We begin with the raw amino-acid sequence, 363 residues long: Osmoprotective compounds uptake ATP-binding protein GgtA (363 aa).

The ABC transporter domain maps to 4–234 (VSFEQVTKQF…PANLFVAGFI (231 aa)). 36–43 (GPSGCGKT) provides a ligand contact to ATP.

This sequence belongs to the ABC transporter superfamily. In terms of assembly, the complex is composed of two ATP-binding proteins (GgtA), two transmembrane proteins (GgtC and GgtD) and a solute-binding protein (GgtB).

The protein localises to the cell membrane. Part of the ABC transporter complex GgtABCD involved in the uptake of the osmoprotective compounds glucosylglycerol (GG), sucrose and trehalose. Responsible for energy coupling to the transport system. This is Osmoprotective compounds uptake ATP-binding protein GgtA from Synechocystis sp. (strain ATCC 27184 / PCC 6803 / Kazusa).